The primary structure comprises 174 residues: RNA pyrophosphohydrolase (174 aa).

The Nudix hydrolase domain maps to 6-150; sequence GFRPNVGIVI…KREVYRRVMK (145 aa). Residues 38–59 carry the Nudix box motif; sequence GGVDDGETPEQAMFRELYEEIG.

Belongs to the Nudix hydrolase family. RppH subfamily. The cofactor is a divalent metal cation.

Functionally, accelerates the degradation of transcripts by removing pyrophosphate from the 5'-end of triphosphorylated RNA, leading to a more labile monophosphorylated state that can stimulate subsequent ribonuclease cleavage. The protein is RNA pyrophosphohydrolase of Tolumonas auensis (strain DSM 9187 / NBRC 110442 / TA 4).